A 659-amino-acid polypeptide reads, in one-letter code: uncharacterized protein (659 aa).

16 helical membrane-spanning segments follow: residues 24-44, 71-91, 115-135, 157-177, 183-203, 214-234, 242-262, 279-299, 311-331, 365-385, 393-413, 433-453, 490-510, 517-537, 550-570, and 596-616; these read TTLMVAGLLGNVVAVAAYGLF, FGASLSSALCLGALIYFVMMV, IGWLAFALTMVVVQAANDSGV, RAWIVVTICALLVTLTLRVII, FVLLIPAVIGVIATAVTGNAG, AVIVFALAIAALSGLKITAAL, AVLIVQVVCGVLALAYGAELV, LGLVAGVLVTLVCFSDCWALV, LTALAMMAVTAATAAMSVQTA, FDSLIGATAIVLGIGYVAGFV, TWPVGRLVAWLTGCVALVFTS, MTLNMFIPVLLVLGGPVTLAL, FILFVGSPYIVYFTPLFDTLV, EFMAIHFLLVGYIFYWAIIGI, IGLLFAVMPFHAFFGIALMTM, and IGGAIAWSATELPVIIVIVAL.

The protein to M.tuberculosis Rv0102.

The protein localises to the cell membrane. This is an uncharacterized protein from Mycobacterium leprae (strain TN).